Consider the following 462-residue polypeptide: ATP synthase subunit beta (462 aa).

151–158 serves as a coordination point for ATP; sequence GGAGVGKT.

Belongs to the ATPase alpha/beta chains family. As to quaternary structure, F-type ATPases have 2 components, CF(1) - the catalytic core - and CF(0) - the membrane proton channel. CF(1) has five subunits: alpha(3), beta(3), gamma(1), delta(1), epsilon(1). CF(0) has four main subunits: a(1), b(1), b'(1) and c(9-12).

It is found in the cell inner membrane. The catalysed reaction is ATP + H2O + 4 H(+)(in) = ADP + phosphate + 5 H(+)(out). Its function is as follows. Produces ATP from ADP in the presence of a proton gradient across the membrane. The catalytic sites are hosted primarily by the beta subunits. The polypeptide is ATP synthase subunit beta (Chlorobium phaeobacteroides (strain BS1)).